Consider the following 301-residue polypeptide: Phosphatidylserine decarboxylase proenzyme (301 aa).

Residues Asp-117, His-173, and Ser-260 each act as charge relay system; for autoendoproteolytic cleavage activity in the active site. The active-site Schiff-base intermediate with substrate; via pyruvic acid; for decarboxylase activity is Ser-260. A Pyruvic acid (Ser); by autocatalysis modification is found at Ser-260.

The protein belongs to the phosphatidylserine decarboxylase family. PSD-B subfamily. Prokaryotic type II sub-subfamily. As to quaternary structure, heterodimer of a large membrane-associated beta subunit and a small pyruvoyl-containing alpha subunit. Requires pyruvate as cofactor. Is synthesized initially as an inactive proenzyme. Formation of the active enzyme involves a self-maturation process in which the active site pyruvoyl group is generated from an internal serine residue via an autocatalytic post-translational modification. Two non-identical subunits are generated from the proenzyme in this reaction, and the pyruvate is formed at the N-terminus of the alpha chain, which is derived from the carboxyl end of the proenzyme. The autoendoproteolytic cleavage occurs by a canonical serine protease mechanism, in which the side chain hydroxyl group of the serine supplies its oxygen atom to form the C-terminus of the beta chain, while the remainder of the serine residue undergoes an oxidative deamination to produce ammonia and the pyruvoyl prosthetic group on the alpha chain. During this reaction, the Ser that is part of the protease active site of the proenzyme becomes the pyruvoyl prosthetic group, which constitutes an essential element of the active site of the mature decarboxylase.

The protein localises to the cell membrane. The enzyme catalyses a 1,2-diacyl-sn-glycero-3-phospho-L-serine + H(+) = a 1,2-diacyl-sn-glycero-3-phosphoethanolamine + CO2. The protein operates within phospholipid metabolism; phosphatidylethanolamine biosynthesis; phosphatidylethanolamine from CDP-diacylglycerol: step 2/2. Catalyzes the formation of phosphatidylethanolamine (PtdEtn) from phosphatidylserine (PtdSer). This Chlamydia muridarum (strain MoPn / Nigg) protein is Phosphatidylserine decarboxylase proenzyme.